The following is a 466-amino-acid chain: Glucose-6-phosphate 1-dehydrogenase 1 (466 aa).

Residues Ser48, 88-89 (DV), and Lys141 each bind NADP(+). Substrate is bound by residues His171, Lys175, Glu209, and Asp228. His233 functions as the Proton acceptor in the catalytic mechanism. Positions 319 and 324 each coordinate substrate.

The protein belongs to the glucose-6-phosphate dehydrogenase family.

It carries out the reaction D-glucose 6-phosphate + NADP(+) = 6-phospho-D-glucono-1,5-lactone + NADPH + H(+). It functions in the pathway carbohydrate degradation; pentose phosphate pathway; D-ribulose 5-phosphate from D-glucose 6-phosphate (oxidative stage): step 1/3. Catalyzes the oxidation of glucose 6-phosphate to 6-phosphogluconolactone. The chain is Glucose-6-phosphate 1-dehydrogenase 1 from Mycobacterium tuberculosis (strain ATCC 25618 / H37Rv).